The primary structure comprises 307 residues: Transcription initiation factor IIB (307 aa).

2 tandem repeats follow at residues 123 to 206 (NELE…LREL) and 217 to 298 (DYVT…ELTQ).

The protein belongs to the TFIIB family.

Stabilizes TBP binding to an archaeal box-A promoter. Also responsible for recruiting RNA polymerase II to the pre-initiation complex (DNA-TBP-TFIIB). The polypeptide is Transcription initiation factor IIB (Sulfolobus acidocaldarius (strain ATCC 33909 / DSM 639 / JCM 8929 / NBRC 15157 / NCIMB 11770)).